Reading from the N-terminus, the 186-residue chain is Translation initiation factor IF-3 (186 aa).

The tract at residues 1–20 (MINRSAGKDRDRSRSGDKEL) is disordered.

This sequence belongs to the IF-3 family. As to quaternary structure, monomer.

The protein resides in the cytoplasm. In terms of biological role, IF-3 binds to the 30S ribosomal subunit and shifts the equilibrium between 70S ribosomes and their 50S and 30S subunits in favor of the free subunits, thus enhancing the availability of 30S subunits on which protein synthesis initiation begins. In Borrelia hermsii (strain HS1 / DAH), this protein is Translation initiation factor IF-3.